The following is a 483-amino-acid chain: M protein, serotype 6 (483 aa).

The first 42 residues, 1 to 42, serve as a signal peptide directing secretion; sequence MAKNNTNRHYSLRKLKKGTASVAVALSVIGAGLVVNTNEVSA. A coiled-coil region spans residues 54-171; it reads DKARELLNKY…IGTLKKTLDE (118 aa). Repeat copies occupy residues 69 to 75, 76 to 82, 83 to 89, 90 to 96, 97 to 103, 104 to 110, 111 to 117, and 118 to 124. The segment at 69 to 138 is 10 X 7 AA approximate tandem repeats of [KMNR]-L-[TQ]-[TDA]-[ENQ]-N-[NDK]; the sequence is MLQANNDKLT…EENRLTTENK (70 aa). Residues 74–87 are compositionally biased toward polar residues; that stretch reads NDKLTTENNNLTDQ. Residues 74–157 form a disordered region; that stretch reads NDKLTTENNN…EEEAANKERE (84 aa). The span at 88–113 shows a compositional bias: low complexity; that stretch reads NKNLTTENKNLTDQNKNLTTENKNLT. Basic and acidic residues-rich tracts occupy residues 122–135 and 143–157; these read ENKE…RLTT and KLSE…KERE. A 9-1; approximate repeat occupies 125–131; it reads ELKAEEN. Repeat copies occupy residues 132 to 138, 157 to 181, 182 to 206, 207 to 231, and 232 to 256. The segment at 157–269 is 4.5 X 25 AA tandem repeats of E-[NS]-K-E-[TA]-I-G-T-L-K-K-[TI]-L-D-E-T-V-K-D-K-I-A-[KR]-E-Q; sequence ENKEAIGTLK…QDIGALKQEL (113 aa). 2 disordered regions span residues 255–298 and 314–345; these read EQKS…EAKK and VKEE…VEKA. A 5-2; truncated repeat occupies 257–269; sequence KSKQDIGALKQEL. Composition is skewed to basic and acidic residues over residues 268–298 and 328–345; these read ELAK…EAKK and LRRD…VEKA. C repeat units lie at residues 270–304 and 312–346; these read AKKD…EKDL and DKVK…EKAL. The tract at residues 279 to 347 is binding to CD46; sequence SEASRKGLRR…AKKQVEKALE (69 aa). Residues 279 to 347 are two directly repeated 27 amino acid blocks separated by 15 amino acids; that stretch reads SEASRKGLRR…AKKQVEKALE (69 aa). Residues 280–408 adopt a coiled-coil conformation; sequence EASRKGLRRD…LAKLRAGKAS (129 aa). A hydrophilic region spans residues 348–411; it reads EANSKLAALE…LRAGKASDSQ (64 aa). D repeat units lie at residues 379 to 384, 385 to 390, 393 to 398, and 400 to 405; these read AKLEAE, AKALKE, AKQAEE, and AKLRAG. The interval 400-455 is disordered; it reads AKLRAGKASDSQTPDAKPGNKVVPGKGQAPQAGTKPNQNKAPMKETKRQLPSTGET. The short motif at 449-453 is the LPXTG sorting signal element; it reads LPSTG. Thr-452 is subject to Pentaglycyl murein peptidoglycan amidated threonine. A propeptide spans 453 to 483 (removed by sortase); that stretch reads GETANPFFTAAALTVMATAGVAAVVKRKEEN.

Belongs to the M protein family.

It is found in the secreted. Its subcellular location is the cell wall. Functionally, mediates the attachment of S.pyogenes to skin epithelial cells through the binding of the human membrane cofactor protein CD46. Also binds to the factor H and factor H-like protein 1. These interactions could contribute to the fact that the M6 protein protects the bacterium from the phagocytosis by regulating the complement activation on the bacterial surface. The polypeptide is M protein, serotype 6 (emm6) (Streptococcus pyogenes).